The sequence spans 89 residues: Small ribosomal subunit protein uS15 (89 aa).

Belongs to the universal ribosomal protein uS15 family. Part of the 30S ribosomal subunit. Forms a bridge to the 50S subunit in the 70S ribosome, contacting the 23S rRNA.

Functionally, one of the primary rRNA binding proteins, it binds directly to 16S rRNA where it helps nucleate assembly of the platform of the 30S subunit by binding and bridging several RNA helices of the 16S rRNA. In terms of biological role, forms an intersubunit bridge (bridge B4) with the 23S rRNA of the 50S subunit in the ribosome. This Ectopseudomonas mendocina (strain ymp) (Pseudomonas mendocina) protein is Small ribosomal subunit protein uS15.